The primary structure comprises 157 residues: SsrA-binding protein (157 aa).

The protein belongs to the SmpB family.

The protein resides in the cytoplasm. In terms of biological role, required for rescue of stalled ribosomes mediated by trans-translation. Binds to transfer-messenger RNA (tmRNA), required for stable association of tmRNA with ribosomes. tmRNA and SmpB together mimic tRNA shape, replacing the anticodon stem-loop with SmpB. tmRNA is encoded by the ssrA gene; the 2 termini fold to resemble tRNA(Ala) and it encodes a 'tag peptide', a short internal open reading frame. During trans-translation Ala-aminoacylated tmRNA acts like a tRNA, entering the A-site of stalled ribosomes, displacing the stalled mRNA. The ribosome then switches to translate the ORF on the tmRNA; the nascent peptide is terminated with the 'tag peptide' encoded by the tmRNA and targeted for degradation. The ribosome is freed to recommence translation, which seems to be the essential function of trans-translation. In Rhodococcus jostii (strain RHA1), this protein is SsrA-binding protein.